The chain runs to 234 residues: Small ribosomal subunit protein uS3 (234 aa).

The KH type-2 domain maps to 39 to 107 (IRKYVKKELY…EIAVNIKEER (69 aa)). The segment covering 213–222 (PTEKAEETTS) has biased composition (basic and acidic residues). The disordered stretch occupies residues 213-234 (PTEKAEETTSKPKRRPAKKRGK). The span at 223–234 (KPKRRPAKKRGK) shows a compositional bias: basic residues.

Belongs to the universal ribosomal protein uS3 family. As to quaternary structure, part of the 30S ribosomal subunit. Forms a tight complex with proteins S10 and S14.

Its function is as follows. Binds the lower part of the 30S subunit head. Binds mRNA in the 70S ribosome, positioning it for translation. This chain is Small ribosomal subunit protein uS3, found in Aliarcobacter butzleri (strain RM4018) (Arcobacter butzleri).